Reading from the N-terminus, the 338-residue chain is Tryptophan--tRNA ligase (338 aa).

Residues 11–13 (QPS) and 19–20 (GN) each bind ATP. Residues 12–20 (PSGELSIGN) carry the 'HIGH' region motif. Asp-135 is a binding site for L-tryptophan. ATP is bound by residues 147 to 149 (GSD), Val-189, and 198 to 202 (KMSKS). The 'KMSKS' region motif lies at 198 to 202 (KMSKS).

This sequence belongs to the class-I aminoacyl-tRNA synthetase family. Homodimer.

The protein localises to the cytoplasm. It catalyses the reaction tRNA(Trp) + L-tryptophan + ATP = L-tryptophyl-tRNA(Trp) + AMP + diphosphate + H(+). Its function is as follows. Catalyzes the attachment of tryptophan to tRNA(Trp). This is Tryptophan--tRNA ligase from Vibrio vulnificus (strain YJ016).